The primary structure comprises 167 residues: Mitochondrial inner membrane protease subunit 1 (167 aa).

Active-site residues include Ser-40 and Lys-83.

This sequence belongs to the peptidase S26 family. IMP1 subfamily. Heterodimer of 2 subunits, IMMPL1 and IMMPL2.

It localises to the mitochondrion inner membrane. In terms of biological role, catalyzes the removal of transit peptides required for the targeting of proteins from the mitochondrial matrix, across the inner membrane, into the inter-membrane space. This chain is Mitochondrial inner membrane protease subunit 1 (immp1l), found in Xenopus tropicalis (Western clawed frog).